A 537-amino-acid polypeptide reads, in one-letter code: Chaperonin GroEL (537 aa).

ATP-binding positions include 29–32 (TLGP), 86–90 (DGTTT), G413, and D492.

It belongs to the chaperonin (HSP60) family. Forms a cylinder of 14 subunits composed of two heptameric rings stacked back-to-back. Interacts with the co-chaperonin GroES.

It localises to the cytoplasm. It carries out the reaction ATP + H2O + a folded polypeptide = ADP + phosphate + an unfolded polypeptide.. Functionally, together with its co-chaperonin GroES, plays an essential role in assisting protein folding. The GroEL-GroES system forms a nano-cage that allows encapsulation of the non-native substrate proteins and provides a physical environment optimized to promote and accelerate protein folding. The sequence is that of Chaperonin GroEL from Dehalococcoides mccartyi (strain ATCC BAA-2266 / KCTC 15142 / 195) (Dehalococcoides ethenogenes (strain 195)).